Here is a 280-residue protein sequence, read N- to C-terminus: Ribosomal protein L11 methyltransferase (280 aa).

S-adenosyl-L-methionine-binding residues include threonine 131, glycine 152, aspartate 174, and asparagine 217.

It belongs to the methyltransferase superfamily. PrmA family.

The protein resides in the cytoplasm. It catalyses the reaction L-lysyl-[protein] + 3 S-adenosyl-L-methionine = N(6),N(6),N(6)-trimethyl-L-lysyl-[protein] + 3 S-adenosyl-L-homocysteine + 3 H(+). Methylates ribosomal protein L11. The protein is Ribosomal protein L11 methyltransferase of Bacteroides thetaiotaomicron (strain ATCC 29148 / DSM 2079 / JCM 5827 / CCUG 10774 / NCTC 10582 / VPI-5482 / E50).